The sequence spans 469 residues: Phosphoglucosamine mutase (469 aa).

Ser-117 acts as the Phosphoserine intermediate in catalysis. Residues Ser-117, Asp-263, Asp-265, and Asp-267 each contribute to the Mg(2+) site. Ser-117 carries the phosphoserine modification.

This sequence belongs to the phosphohexose mutase family. Mg(2+) is required as a cofactor. Activated by phosphorylation.

The enzyme catalyses alpha-D-glucosamine 1-phosphate = D-glucosamine 6-phosphate. Functionally, catalyzes the conversion of glucosamine-6-phosphate to glucosamine-1-phosphate. This chain is Phosphoglucosamine mutase, found in Anaeromyxobacter sp. (strain Fw109-5).